We begin with the raw amino-acid sequence, 183 residues long: Capsid protein (183 aa).

The disordered stretch occupies residues 136-183; the sequence is NAPILSTLPETTVVRRRGRSPRRRTPSPRRRRSQSPRRRRSQSPASQC. A compositionally biased stretch (basic residues) spans 149–176; that stretch reads VRRRGRSPRRRTPSPRRRRSQSPRRRRS. A phosphoserine; by host mark is found at Ser-155, Ser-162, and Ser-170. A 1; half-length repeat occupies 155–161; it reads SPRRRTP. Residues 155–177 are 3 X 8 AA repeats of S-P-R-R-R-[PR]-S-Q; the sequence is SPRRRTPSPRRRRSQSPRRRRSQ. The short motif at 158–175 is the Bipartite nuclear localization signal element; it reads RRTPSPRRRRSQSPRRRR. 2 tandem repeats follow at residues 162–169 and 170–177. The RNA binding stretch occupies residues 177-183; the sequence is QSPASQC.

It belongs to the orthohepadnavirus core antigen family. In terms of assembly, homodimerizes, then multimerizes. Interacts with cytosol exposed regions of viral L glycoprotein present in the reticulum-to-Golgi compartment. Interacts with human FLNB. Phosphorylated form interacts with host importin alpha; this interaction depends on the exposure of the NLS, which itself depends upon genome maturation and/or phosphorylation of the capsid protein. Interacts with host NUP153. Phosphorylated by host SRPK1, SRPK2, and maybe protein kinase C or GAPDH. Phosphorylation is critical for pregenomic RNA packaging. Protein kinase C phosphorylation is stimulated by HBx protein and may play a role in transport of the viral genome to the nucleus at the late step during the viral replication cycle.

The protein localises to the virion. Its subcellular location is the host cytoplasm. Self assembles to form an icosahedral capsid. Most capsids appear to be large particles with an icosahedral symmetry of T=4 and consist of 240 copies of capsid protein, though a fraction forms smaller T=3 particles consisting of 180 capsid proteins. Entering capsids are transported along microtubules to the nucleus. Phosphorylation of the capsid is thought to induce exposure of nuclear localization signal in the C-terminal portion of the capsid protein that allows binding to the nuclear pore complex via the importin (karyopherin-) alpha and beta. Capsids are imported in intact form through the nuclear pore into the nuclear basket, where it probably binds NUP153. Only capsids that contain the mature viral genome can release the viral DNA and capsid protein into the nucleoplasm. Immature capsids get stuck in the basket. Capsids encapsulate the pre-genomic RNA and the P protein. Pre-genomic RNA is reverse-transcribed into DNA while the capsid is still in the cytoplasm. The capsid can then either be directed to the nucleus, providing more genomes for transcription, or bud through the endoplasmic reticulum to provide new virions. This chain is Capsid protein, found in Homo sapiens (Human).